Reading from the N-terminus, the 479-residue chain is Poly(A) polymerase catalytic subunit (479 aa).

Active-site residues include Asp-202 and Asp-204. Residues Asp-202, Asp-204, and Asp-253 each contribute to the Ca(2+) site.

The protein belongs to the poxviridae poly(A) polymerase catalytic subunit family. As to quaternary structure, heterodimer of a large (catalytic) subunit and a small (regulatory) subunit.

The enzyme catalyses RNA(n) + ATP = RNA(n)-3'-adenine ribonucleotide + diphosphate. Functionally, polymerase that creates the 3'-poly(A) tail of mRNA's. This is Poly(A) polymerase catalytic subunit (OPG063) from Homo sapiens (Human).